Consider the following 249-residue polypeptide: Thrombin-like enzyme barnettobin (249 aa).

The signal sequence occupies residues 1 to 10; it reads APKELQVSYA. Positions 11 to 16 are excised as a propeptide; that stretch reads HKSSEL. Positions 17–240 constitute a Peptidase S1 domain; the sequence is VIGGDECDIN…YPPWIQSIIA (224 aa). 6 disulfide bridges follow: cysteine 23/cysteine 154, cysteine 41/cysteine 57, cysteine 89/cysteine 247, cysteine 133/cysteine 201, cysteine 165/cysteine 180, and cysteine 191/cysteine 216. Active-site charge relay system residues include histidine 56 and aspartate 101. N-linked (GlcNAc...) asparagine glycosylation is found at asparagine 145 and asparagine 161. Serine 195 acts as the Charge relay system in catalysis. An N-linked (GlcNAc...) asparagine glycan is attached at asparagine 242.

Belongs to the peptidase S1 family. Snake venom subfamily. Monomer. In terms of processing, glycoprotein, contains approx. 52% carbohydrate which could be removed by N-glycosidase. Glycosylation is important, since deglycosylated barnettobin loses its clotting and defibrinogenating effects. Expressed by the venom gland.

Its subcellular location is the secreted. With respect to regulation, both coagulant and amidolytic activities are inhibited by PMSF. Amidolytic activity is partially inhibited by DTT, chymostatin, SBTI and TLCK, but not by heparin and EDTA. In terms of biological role, thrombin-like snake venom serine protease that releases only fibrinopeptide A from human Aalpha chain of fibrinogen (specific coagulant activity was 251.7 NIH thrombin units/mg). Also shows fibrino(geno)lytic activities in vitro and defibrinogenating effects in vivo. In Bothrops barnetti (Barnett's lancehead), this protein is Thrombin-like enzyme barnettobin.